The primary structure comprises 888 residues: Glutamate receptor 3 (888 aa).

The signal sequence occupies residues 1–22 (MGQSVLRAVFFLVLGLLGHSHG). The Extracellular segment spans residues 23-546 (GFPNTISIGG…GVFSFLDPLA (524 aa)). 5 N-linked (GlcNAc...) asparagine glycosylation sites follow: asparagine 57, asparagine 260, asparagine 374, asparagine 409, and asparagine 416. Cysteine 85 and cysteine 334 are oxidised to a cystine. Positions 502, 504, and 509 each coordinate L-glutamate. The helical transmembrane segment at 547-567 (YEIWMCIVFAYIGVSVVLFLV) threads the bilayer. Residues 568-596 (SRFSPYEWHLEDNNEEPRDPQSPPDPPNE) are Cytoplasmic-facing. Positions 597-612 (FGIFNSLWFSLGAFMQ) form an intramembrane region, helical; Pore-forming. An intramembrane segment occupies 613-615 (QGC). Cysteine 615 carries S-palmitoyl cysteine lipidation. Residues 616-621 (DISPRS) are Cytoplasmic-facing. Residues 622–642 (LSGRIVGGVWWFFTLIIISSY) traverse the membrane as a helical segment. The Extracellular segment spans residues 643 to 817 (TANLAAFLTV…DKTSALSLSN (175 aa)). The L-glutamate site is built by serine 680, threonine 681, and glutamate 731. A disulfide bridge connects residues cysteine 744 and cysteine 799. The helical transmembrane segment at 818–838 (VAGVFYILVGGLGLAMMVALI) threads the bilayer. The Cytoplasmic segment spans residues 839-888 (EFCYKSRAESKRMKLTKNTQNFKPAPATNTQNYATYREGYNVYGTESVKI). Residue cysteine 841 is the site of S-palmitoyl cysteine attachment. Residues tyrosine 871 and tyrosine 881 each carry the phosphotyrosine modification.

The protein belongs to the glutamate-gated ion channel (TC 1.A.10.1) family. GRIA3 subfamily. As to quaternary structure, homotetramer or heterotetramer of pore-forming glutamate receptor subunits. Tetramers may be formed by the dimerization of dimers. Interacts with PICK1, GRIP1 and GRIP2. Found in a complex with GRIA1, GRIA2, GRIA4, CNIH2, CNIH3, CACNG2, CACNG3, CACNG4, CACNG5, CACNG7 and CACNG8. Interacts with CACNG5. Found in a complex with GRIA1, GRIA2, GRIA4, DLG4, CACNG8 and CNIH2.

The protein localises to the cell membrane. The protein resides in the postsynaptic cell membrane. It localises to the postsynaptic density membrane. The enzyme catalyses Ca(2+)(in) = Ca(2+)(out). Its function is as follows. Ionotropic glutamate receptor that functions as a ligand-gated cation channel, gated by L-glutamate and glutamatergic agonists such as alpha-amino-3-hydroxy-5-methyl-4-isoxazolepropionic acid (AMPA), quisqualic acid, and kainic acid. L-glutamate acts as an excitatory neurotransmitter at many synapses in the central nervous system and plays an important role in fast excitatory synaptic transmission by inducing long-term potentiation. Binding of the excitatory neurotransmitter L-glutamate induces a conformation change, leading to the opening of the cation channel, and thereby converts the chemical signal to an electrical impulse upon entry of calcium. The receptor then desensitizes rapidly and enters a transient inactive state, characterized by the presence of bound agonist. In the presence of CACNG8, shows resensitization which is characterized by a delayed accumulation of current flux upon continued application of glutamate. This chain is Glutamate receptor 3, found in Mus musculus (Mouse).